The following is a 142-amino-acid chain: Large ribosomal subunit protein uL13c (142 aa).

The protein belongs to the universal ribosomal protein uL13 family. In terms of assembly, part of the 50S ribosomal subunit.

It is found in the plastid. The protein resides in the chloroplast. The chain is Large ribosomal subunit protein uL13c from Pyropia yezoensis (Susabi-nori).